A 980-amino-acid chain; its full sequence is SLIT and NTRK-like protein 3 (980 aa).

Positions 1–27 are cleaved as a signal peptide; the sequence is MMKPSIAEMLHRGRMLWIILLSTIALG. At 30–655 the chain is on the extracellular side; that stretch reads TPIPLIEDSE…SPPGGPVPLS (626 aa). The N-linked (GlcNAc...) asparagine glycan is linked to Asn69. 6 LRR repeats span residues 79 to 100, 103 to 124, 127 to 148, 151 to 172, 175 to 196, and 198 to 219; these read RPFK…SFLH, NAVS…AFNG, ILKR…TFLG, SLEY…AFRN, KLRV…LFKA, and SLTH…GMLD. Residues 233–284 form the LRRCT 1 domain; it reads NPWNCTCEIVQLKSWLERIPYTALVGDITCETPFHFHGKDLREIKKTELCPL. Residues 326–361 form a disordered region; that stretch reads EYKSSNKQPKPTKQPRTPRPPSTSQALYPGPNQPPI. In terms of domain architecture, LRRNT spans 365-407; the sequence is QTRPPIPIICPTGCTCNLHINDLGLTVNCKERGFNNISELLPR. LRR repeat units follow at residues 410 to 431, 434 to 455, 458 to 479, 482 to 503, 506 to 527, and 529 to 550; these read NAKK…DFWN, SLDL…AFIN, NLKS…MFRG, SLHY…AFSL, NLKL…AFAG, and SLAR…GVLE. The LRRCT 2 domain occupies 563–614; sequence NPWDCTCDLVPFKQWIETISSVSVVGDVLCRTPENLTHRDVRTIELEVLCPE. N-linked (GlcNAc...) asparagine glycosylation occurs at Asn597. The segment at 622–644 is disordered; sequence GPSPPQPGDYHPNGGPTSASPYE. A helical membrane pass occupies residues 656–676; sequence VLILSLLVLFFSAVFVAAGLF. Residues 677–980 lie on the Cytoplasmic side of the membrane; that stretch reads AYVLRRRRKK…EVLEKTAYRF (304 aa). Disordered stretches follow at residues 709–735 and 762–785; these read LFED…EKAP and EEEV…GTQP. The segment covering 715 to 725 has biased composition (gly residues); that stretch reads GNSGGSGGGGR.

The protein belongs to the SLITRK family. As to expression, broadly expressed in embryonic brain with highest expression in cortical plate, pyramidal cell layer of the hippocampus, thalamus and hypothalamus.

The protein resides in the membrane. Its function is as follows. Suppresses neurite outgrowth. The sequence is that of SLIT and NTRK-like protein 3 (Slitrk3) from Mus musculus (Mouse).